A 417-amino-acid polypeptide reads, in one-letter code: 4-hydroxy-3-methylbut-2-en-1-yl diphosphate synthase (flavodoxin) (417 aa).

[4Fe-4S] cluster-binding residues include C304, C307, C350, and E357.

This sequence belongs to the IspG family. The cofactor is [4Fe-4S] cluster.

The catalysed reaction is (2E)-4-hydroxy-3-methylbut-2-enyl diphosphate + oxidized [flavodoxin] + H2O + 2 H(+) = 2-C-methyl-D-erythritol 2,4-cyclic diphosphate + reduced [flavodoxin]. It functions in the pathway isoprenoid biosynthesis; isopentenyl diphosphate biosynthesis via DXP pathway; isopentenyl diphosphate from 1-deoxy-D-xylulose 5-phosphate: step 5/6. Converts 2C-methyl-D-erythritol 2,4-cyclodiphosphate (ME-2,4cPP) into 1-hydroxy-2-methyl-2-(E)-butenyl 4-diphosphate. The polypeptide is 4-hydroxy-3-methylbut-2-en-1-yl diphosphate synthase (flavodoxin) (Sinorhizobium medicae (strain WSM419) (Ensifer medicae)).